We begin with the raw amino-acid sequence, 123 residues long: Large ribosomal subunit protein bL12 (123 aa).

This sequence belongs to the bacterial ribosomal protein bL12 family. As to quaternary structure, homodimer. Part of the ribosomal stalk of the 50S ribosomal subunit. Forms a multimeric L10(L12)X complex, where L10 forms an elongated spine to which 2 to 4 L12 dimers bind in a sequential fashion. Binds GTP-bound translation factors.

Functionally, forms part of the ribosomal stalk which helps the ribosome interact with GTP-bound translation factors. Is thus essential for accurate translation. The protein is Large ribosomal subunit protein bL12 of Rickettsia bellii (strain OSU 85-389).